The primary structure comprises 44 residues: Phycoerythrin alpha-1 chain (44 aa).

A disordered region spans residues 1–44 (AMDKSAKAPQITIFDHRGCSRAPKSETGGTATKDDQMMVKVSQV). Lys4 carries the post-translational modification 5-hydroxylysine. 15,16-dihydrobiliverdin contacts are provided by Cys19 and Arg21. The 15,16-dihydrobiliverdin chromophore stretch occupies residues 24–26 (KSE). Lys40 is a binding site for 15,16-dihydrobiliverdin.

It belongs to the phycoerythrin family. Heterotetramer of 2 different alpha chains and 2 identical beta chains. The subunit composition could comprise of any combination of 2 out of 4 different alpha units with an invariant beta unit. Post-translationally, contains one covalently linked 15,16-dihydrobiliverdin chromophore.

Its subcellular location is the plastid. It localises to the chloroplast thylakoid membrane. Light-harvesting photosynthetic tetrapyrrole chromophore-protein from the phycobiliprotein complex. This is Phycoerythrin alpha-1 chain (cpeA1) from Rhodomonas sp. (strain CS 24) (Chroomonas sp. (strain CS24)).